The following is a 107-amino-acid chain: UPF0122 protein MYPE4850 (107 aa).

This sequence belongs to the UPF0122 family.

Functionally, might take part in the signal recognition particle (SRP) pathway. This is inferred from the conservation of its genetic proximity to ftsY/ffh. May be a regulatory protein. The sequence is that of UPF0122 protein MYPE4850 from Malacoplasma penetrans (strain HF-2) (Mycoplasma penetrans).